We begin with the raw amino-acid sequence, 279 residues long: 1D-myo-inositol 2-acetamido-2-deoxy-alpha-D-glucopyranoside deacetylase (279 aa).

Zn(2+) contacts are provided by His-12, Asp-15, and His-146.

It belongs to the MshB deacetylase family. Requires Zn(2+) as cofactor.

The enzyme catalyses 1D-myo-inositol 2-acetamido-2-deoxy-alpha-D-glucopyranoside + H2O = 1D-myo-inositol 2-amino-2-deoxy-alpha-D-glucopyranoside + acetate. Functionally, catalyzes the deacetylation of 1D-myo-inositol 2-acetamido-2-deoxy-alpha-D-glucopyranoside (GlcNAc-Ins) in the mycothiol biosynthesis pathway. The polypeptide is 1D-myo-inositol 2-acetamido-2-deoxy-alpha-D-glucopyranoside deacetylase (Mycobacteroides abscessus (strain ATCC 19977 / DSM 44196 / CCUG 20993 / CIP 104536 / JCM 13569 / NCTC 13031 / TMC 1543 / L948) (Mycobacterium abscessus)).